A 150-amino-acid chain; its full sequence is MTKTMMIFAAAMTVMALLLVPTIEAQTECVSKLVPCFNDLNTTTTPVKECCDSIKEAVEKELTCLCTIYTSPGLLAQFNVTTEKALGLSRRCNVTTDLSACTAKGAPSPKASLPPPAPAGNTKKDAGAGNKLAGYGVTTVILSLISSIFF.

An N-terminal signal peptide occupies residues 1-25 (MTKTMMIFAAAMTVMALLLVPTIEA). 4 disulfide bridges follow: cysteine 29–cysteine 66, cysteine 36–cysteine 50, cysteine 51–cysteine 92, and cysteine 64–cysteine 101. N-linked (GlcNAc...) asparagine glycans are attached at residues asparagine 41, asparagine 79, and asparagine 93. Residues 103–125 (AKGAPSPKASLPPPAPAGNTKKD) form a disordered region. A lipid anchor (GPI-anchor amidated aspartate) is attached at aspartate 125. The propeptide at 126–150 (AGAGNKLAGYGVTTVILSLISSIFF) is removed in mature form.

It belongs to the plant LTP family. Up-regulated in the epidermis of stems.

It localises to the cell membrane. Functionally, probable lipid transfer protein. The polypeptide is Non-specific lipid transfer protein GPI-anchored 7 (Arabidopsis thaliana (Mouse-ear cress)).